The primary structure comprises 294 residues: Nucleotide-binding protein CLB_3433 (294 aa).

Residue 8-15 (GLSGAGKT) coordinates ATP. 59-62 (DIRG) is a GTP binding site.

The protein belongs to the RapZ-like family.

Displays ATPase and GTPase activities. The polypeptide is Nucleotide-binding protein CLB_3433 (Clostridium botulinum (strain ATCC 19397 / Type A)).